A 165-amino-acid polypeptide reads, in one-letter code: UPF0303 protein Bcenmc03_1534 (165 aa).

This sequence belongs to the UPF0303 family.

This Burkholderia orbicola (strain MC0-3) protein is UPF0303 protein Bcenmc03_1534.